We begin with the raw amino-acid sequence, 121 residues long: ATP synthase epsilon chain (121 aa).

This sequence belongs to the ATPase epsilon chain family. F-type ATPases have 2 components, CF(1) - the catalytic core - and CF(0) - the membrane proton channel. CF(1) has five subunits: alpha(3), beta(3), gamma(1), delta(1), epsilon(1). CF(0) has three main subunits: a, b and c.

The protein resides in the cell membrane. Produces ATP from ADP in the presence of a proton gradient across the membrane. The chain is ATP synthase epsilon chain (atpC) from Mycobacterium bovis (strain ATCC BAA-935 / AF2122/97).